The sequence spans 455 residues: tRNA-2-methylthio-N(6)-dimethylallyladenosine synthase (455 aa).

In terms of domain architecture, MTTase N-terminal spans 10–130 (RKVFIKTYGC…LPDALKRVRR (121 aa)). The [4Fe-4S] cluster site is built by Cys-19, Cys-55, Cys-93, Cys-171, Cys-175, and Cys-178. The Radical SAM core domain maps to 157-389 (RSRGVTAFLT…QALLLRQQKE (233 aa)). The 63-residue stretch at 392–454 (ESLVGKTMDV…PNSLFAEVAG (63 aa)) folds into the TRAM domain.

Belongs to the methylthiotransferase family. MiaB subfamily. In terms of assembly, monomer. It depends on [4Fe-4S] cluster as a cofactor.

It is found in the cytoplasm. The enzyme catalyses N(6)-dimethylallyladenosine(37) in tRNA + (sulfur carrier)-SH + AH2 + 2 S-adenosyl-L-methionine = 2-methylsulfanyl-N(6)-dimethylallyladenosine(37) in tRNA + (sulfur carrier)-H + 5'-deoxyadenosine + L-methionine + A + S-adenosyl-L-homocysteine + 2 H(+). In terms of biological role, catalyzes the methylthiolation of N6-(dimethylallyl)adenosine (i(6)A), leading to the formation of 2-methylthio-N6-(dimethylallyl)adenosine (ms(2)i(6)A) at position 37 in tRNAs that read codons beginning with uridine. The chain is tRNA-2-methylthio-N(6)-dimethylallyladenosine synthase from Agrobacterium fabrum (strain C58 / ATCC 33970) (Agrobacterium tumefaciens (strain C58)).